Here is a 138-residue protein sequence, read N- to C-terminus: Putative pre-16S rRNA nuclease (138 aa).

It belongs to the YqgF nuclease family.

It is found in the cytoplasm. Could be a nuclease involved in processing of the 5'-end of pre-16S rRNA. This is Putative pre-16S rRNA nuclease from Porphyromonas gingivalis (strain ATCC BAA-308 / W83).